The chain runs to 384 residues: Putative dioxygenase SSO1533 (384 aa).

His-296, Glu-302, and His-332 together coordinate Fe cation.

Belongs to the homogentisate dioxygenase family. Requires Fe cation as cofactor.

The polypeptide is Putative dioxygenase SSO1533 (Saccharolobus solfataricus (strain ATCC 35092 / DSM 1617 / JCM 11322 / P2) (Sulfolobus solfataricus)).